The following is a 519-amino-acid chain: Cytosol aminopeptidase (519 aa).

Ser42 is subject to Phosphoserine. Lys45 carries the post-translational modification N6-succinyllysine. Ser54 carries the phosphoserine modification. N6-succinyllysine occurs at positions 61 and 103. 2 positions are modified to phosphoserine: Ser180 and Ser194. Leu202, Met203, and Thr205 together coordinate Zn(2+). Lys221 carries the N6-acetyllysine; alternate modification. Position 221 is an N6-succinyllysine; alternate (Lys221). Ser238 bears the Phosphoserine mark. 2 residues coordinate Zn(2+): Lys282 and Asp287. Residues Lys282, Asp287, Ser292, and Lys294 each contribute to the substrate site. Mg(2+) is bound at residue Asp287. Lys294 is an active-site residue. Arg303, Asp305, Asp364, and Glu366 together coordinate Zn(2+). Residues Asp305 and Asp364 each coordinate substrate. Residues Asp364 and Glu366 each contribute to the Mg(2+) site. Arg368 is an active-site residue. Lys455 is subject to N6-acetyllysine; alternate. Lys455 carries the post-translational modification N6-succinyllysine; alternate. An N6-succinyllysine modification is found at Lys476. The residue at position 489 (Lys489) is an N6-acetyllysine; alternate. Lys489 bears the N6-succinyllysine; alternate mark.

The protein belongs to the peptidase M17 family. As to quaternary structure, homohexamer. Requires Zn(2+) as cofactor. Mn(2+) is required as a cofactor.

It localises to the cytoplasm. The enzyme catalyses Release of an N-terminal amino acid, Xaa-|-Yaa-, in which Xaa is preferably Leu, but may be other amino acids including Pro although not Arg or Lys, and Yaa may be Pro. Amino acid amides and methyl esters are also readily hydrolyzed, but rates on arylamides are exceedingly low.. The catalysed reaction is an S-substituted L-cysteinylglycine + H2O = an S-substituted L-cysteine + glycine. It catalyses the reaction L-cysteinylglycine + H2O = L-cysteine + glycine. It carries out the reaction S-benzyl-L-cysteinylglycine + H2O = S-benzyl-L-cysteine + glycine. The enzyme catalyses Release of N-terminal proline from a peptide.. In terms of biological role, cytosolic metallopeptidase that catalyzes the removal of unsubstituted N-terminal hydrophobic amino acids from various peptides. The presence of Zn(2+) ions is essential for the peptidase activity, and the association with other cofactors can modulate the substrate spectificity of the enzyme. For instance, in the presence of Mn(2+), it displays a specific Cys-Gly hydrolyzing activity of Cys-Gly-S-conjugates. Involved in the metabolism of glutathione and in the degradation of glutathione S-conjugates, which may play a role in the control of the cell redox status. The sequence is that of Cytosol aminopeptidase from Homo sapiens (Human).